The chain runs to 235 residues: Lipoprotein-releasing system ATP-binding protein LolD (235 aa).

An ABC transporter domain is found at L7–R234. G43–S50 is an ATP binding site.

This sequence belongs to the ABC transporter superfamily. Lipoprotein translocase (TC 3.A.1.125) family. As to quaternary structure, the complex is composed of two ATP-binding proteins (LolD) and two transmembrane proteins (LolC and LolE).

It localises to the cell inner membrane. In terms of biological role, part of the ABC transporter complex LolCDE involved in the translocation of mature outer membrane-directed lipoproteins, from the inner membrane to the periplasmic chaperone, LolA. Responsible for the formation of the LolA-lipoprotein complex in an ATP-dependent manner. This Pectobacterium atrosepticum (strain SCRI 1043 / ATCC BAA-672) (Erwinia carotovora subsp. atroseptica) protein is Lipoprotein-releasing system ATP-binding protein LolD.